We begin with the raw amino-acid sequence, 140 residues long: Dehydratase ustZ (140 aa).

In terms of domain architecture, EthD spans proline 18 to threonine 113.

The protein belongs to the tpcK family.

It catalyses the reaction naphtopyrone YWA1 = norrubrofusarin + H2O + H(+). It participates in secondary metabolite biosynthesis. In terms of biological role, dehydratase; part of the gene cluster that mediates the biosynthesis of ustilaginoidins, dimeric gamma-naphthopyrones isolated from different fungal species. The first step in the biosynthesis of ustilaginoidins is the production of gamma-naphthopyrone precursor YWA1 by the non-reducing polyketide synthase ustP, via condensation of one acetyl-CoA starter unit with 6 malonyl-CoA units. YWA1 is then probably substrate of the ustZ to yield norrubrofusarin via a dehydration reaction. A key enzyme in the biosynthetic pathway is the laccase ustL, which catalyzes the oxidative dimerization of norrubrofusarin to ustilaginoidin A. It can produce the M- and P-atropisomers in varying amounts, depending on the reaction conditions. For the biosynthesis of 3-methylustilaginoid in derivatives such as chaetochromin A, a methylated derivative of YWA1 is required. The C-methylation is considered to be catalyzed by ustM, the phosphopantetheine attachment site of which indicates that it acts on the growing polyketide chain before release of the product. For the biosynthesis of chaetochromin A, it is assumed that saturation of the D2 double bond takes place before dimerization, and is probably catalyzed by an external reductase because no candidate gene was identified within the cluster. This chain is Dehydratase ustZ, found in Ustilaginoidea virens (Rice false smut fungus).